A 454-amino-acid chain; its full sequence is Bifunctional protein GlmU (454 aa).

The interval 1–226 is pyrophosphorylase; it reads MALNVVILAA…AIEVEGANNR (226 aa). Residues 8-11, lysine 22, glutamine 73, 78-79, 100-102, glycine 137, glutamate 151, asparagine 166, and asparagine 224 contribute to the UDP-N-acetyl-alpha-D-glucosamine site; these read LAAG, GT, and YGD. A Mg(2+)-binding site is contributed by aspartate 102. Residue asparagine 224 coordinates Mg(2+). Residues 227–247 form a linker region; sequence VQLAQLERAYQAREAEKLMIA. Residues 248-454 form an N-acetyltransferase region; that stretch reads GANLRDPSRI…GWQRPVKIKK (207 aa). Residues arginine 330 and lysine 348 each contribute to the UDP-N-acetyl-alpha-D-glucosamine site. Histidine 360 functions as the Proton acceptor in the catalytic mechanism. Residues tyrosine 363 and asparagine 374 each contribute to the UDP-N-acetyl-alpha-D-glucosamine site. Acetyl-CoA is bound by residues alanine 377, 383-384, serine 402, alanine 420, and arginine 437; that span reads NY.

In the N-terminal section; belongs to the N-acetylglucosamine-1-phosphate uridyltransferase family. It in the C-terminal section; belongs to the transferase hexapeptide repeat family. Homotrimer. The cofactor is Mg(2+).

Its subcellular location is the cytoplasm. The catalysed reaction is alpha-D-glucosamine 1-phosphate + acetyl-CoA = N-acetyl-alpha-D-glucosamine 1-phosphate + CoA + H(+). It carries out the reaction N-acetyl-alpha-D-glucosamine 1-phosphate + UTP + H(+) = UDP-N-acetyl-alpha-D-glucosamine + diphosphate. It participates in nucleotide-sugar biosynthesis; UDP-N-acetyl-alpha-D-glucosamine biosynthesis; N-acetyl-alpha-D-glucosamine 1-phosphate from alpha-D-glucosamine 6-phosphate (route II): step 2/2. Its pathway is nucleotide-sugar biosynthesis; UDP-N-acetyl-alpha-D-glucosamine biosynthesis; UDP-N-acetyl-alpha-D-glucosamine from N-acetyl-alpha-D-glucosamine 1-phosphate: step 1/1. It functions in the pathway bacterial outer membrane biogenesis; LPS lipid A biosynthesis. Functionally, catalyzes the last two sequential reactions in the de novo biosynthetic pathway for UDP-N-acetylglucosamine (UDP-GlcNAc). The C-terminal domain catalyzes the transfer of acetyl group from acetyl coenzyme A to glucosamine-1-phosphate (GlcN-1-P) to produce N-acetylglucosamine-1-phosphate (GlcNAc-1-P), which is converted into UDP-GlcNAc by the transfer of uridine 5-monophosphate (from uridine 5-triphosphate), a reaction catalyzed by the N-terminal domain. The chain is Bifunctional protein GlmU from Shewanella sp. (strain ANA-3).